The primary structure comprises 458 residues: tRNA-2-methylthio-N(6)-dimethylallyladenosine synthase (458 aa).

Positions 15–134 (KKVFIKTYGC…LPELLQQAQQ (120 aa)) constitute an MTTase N-terminal domain. 6 residues coordinate [4Fe-4S] cluster: Cys24, Cys60, Cys97, Cys175, Cys179, and Cys182. Residues 161–393 (QKRGVSAFLT…QALLLDQQHR (233 aa)) form the Radical SAM core domain. The 62-residue stretch at 396 to 457 (RSKIGQTTDV…SNSFVGEKAN (62 aa)) folds into the TRAM domain.

It belongs to the methylthiotransferase family. MiaB subfamily. As to quaternary structure, monomer. [4Fe-4S] cluster is required as a cofactor.

The protein resides in the cytoplasm. It carries out the reaction N(6)-dimethylallyladenosine(37) in tRNA + (sulfur carrier)-SH + AH2 + 2 S-adenosyl-L-methionine = 2-methylsulfanyl-N(6)-dimethylallyladenosine(37) in tRNA + (sulfur carrier)-H + 5'-deoxyadenosine + L-methionine + A + S-adenosyl-L-homocysteine + 2 H(+). Functionally, catalyzes the methylthiolation of N6-(dimethylallyl)adenosine (i(6)A), leading to the formation of 2-methylthio-N6-(dimethylallyl)adenosine (ms(2)i(6)A) at position 37 in tRNAs that read codons beginning with uridine. The chain is tRNA-2-methylthio-N(6)-dimethylallyladenosine synthase from Bartonella bacilliformis (strain ATCC 35685 / KC583 / Herrer 020/F12,63).